Consider the following 108-residue polypeptide: Nucleoid-associated protein BPP1222 (108 aa).

The interval 86 to 108 is disordered; it reads TSQEKMASVTAGMPLPPGMKLPF. A compositionally biased stretch (pro residues) spans 99–108; the sequence is PLPPGMKLPF.

Belongs to the YbaB/EbfC family. In terms of assembly, homodimer.

It localises to the cytoplasm. It is found in the nucleoid. In terms of biological role, binds to DNA and alters its conformation. May be involved in regulation of gene expression, nucleoid organization and DNA protection. In Bordetella parapertussis (strain 12822 / ATCC BAA-587 / NCTC 13253), this protein is Nucleoid-associated protein BPP1222.